The sequence spans 279 residues: Digeranylgeranylglyceryl phosphate synthase (279 aa).

The next 9 membrane-spanning stretches (helical) occupy residues 16–36 (LIAGLVGILGATVALGHLPPI), 40–60 (LLIFLVVFLECSWGNIINDYF), 77–99 (GALSKNIALVYGISLGGVAILIA), 104–121 (FEAFIFALGAYLLMYLYA), 124–144 (LKPQPFIGNLVVATLTGITPI), 146–166 (GAIAVGKIGLAGYLALCAFLV), 192–212 (IVWGIESSSKIGVIFSVATII), 220–240 (AGIGLGYFPIIIVDGIILWAA), and 259–279 (LKIAIYLAVFSFLLGSITKGV).

The protein belongs to the UbiA prenyltransferase family. DGGGP synthase subfamily. Requires Mg(2+) as cofactor.

It localises to the cell membrane. It catalyses the reaction sn-3-O-(geranylgeranyl)glycerol 1-phosphate + (2E,6E,10E)-geranylgeranyl diphosphate = 2,3-bis-O-(geranylgeranyl)-sn-glycerol 1-phosphate + diphosphate. The protein operates within membrane lipid metabolism; glycerophospholipid metabolism. Prenyltransferase that catalyzes the transfer of the geranylgeranyl moiety of geranylgeranyl diphosphate (GGPP) to the C2 hydroxyl of (S)-3-O-geranylgeranylglyceryl phosphate (GGGP). This reaction is the second ether-bond-formation step in the biosynthesis of archaeal membrane lipids. The sequence is that of Digeranylgeranylglyceryl phosphate synthase from Thermococcus sibiricus (strain DSM 12597 / MM 739).